Reading from the N-terminus, the 423-residue chain is MLRSKRTKVVYKTADVILPPVEENINSENKNEGEVKVTTFADEPKIEQEEPQQKPEVVDVYSNETDKNEEEVSIITSEDEEEDEKGMLFKRPGGKKHNYAPSKYVGEEFDLDALKEHRKMVKRWIIGISVRFGFWFALLIPVAVLLRPYTIECEPINTFSEFSLCVILFLLLQAGIDLGLAIFSYRKVGKFLESPAVDEINILMAMKPTGGVMGNPHANTEALAASVKMGNIINVHRHKLGALNKAVKKVTNDESGSEVSSEDEESDQETLLRNRKMPTNSKTRSQLFRALKDLNKRTNQYSVKPEKVLEYSEATKGKRMSAGSKLISAMTVIPLLTILFFIIVGSSTITEIKSHLVLKGHDPNDIPTLCIATYSLNWFVLIMCVLQNLIRSAPIISHALKGIDRDIKEAYMKKAAEDDEDED.

The span at 43 to 57 (EPKIEQEEPQQKPEV) shows a compositional bias: basic and acidic residues. The disordered stretch occupies residues 43 to 91 (EPKIEQEEPQQKPEVVDVYSNETDKNEEEVSIITSEDEEEDEKGMLFKR). Positions 67 to 84 (KNEEEVSIITSEDEEEDE) are enriched in acidic residues. The next 2 membrane-spanning stretches (helical) occupy residues 125-145 (IIGI…VAVL) and 162-182 (FSLC…GLAI). A disordered region spans residues 253-282 (DESGSEVSSEDEESDQETLLRNRKMPTNSK). 2 helical membrane-spanning segments follow: residues 326–346 (LISA…IVGS) and 366–386 (IPTL…MCVL).

The protein resides in the host membrane. This is Putative transmembrane protein ORF103 from Magallana gigas (Pacific oyster).